The following is a 462-amino-acid chain: MNLLKQIPKVDKVLSWEGVQTLLETHPRPVVMKAVRNVLEVLRAIVLREEGDAGLFTDEAIMKRVNRELDEINSLNLKRLVNGTGVVIHTNLGRSPLPESVRQTLNEIAFGYSNLEFDLATGERGSRYSHVEEILCELTGAEAALVVNNNAAAVLLALSSLAAGREVIVSRGELVEIGGSFRIPDVMRQSGAILREVGATNRTHLQDYSAAVATETGLLLKVHCSNFAVVGFTAEVSAEQLVELGRQHSLPVMADVGSGNLVELSRRLGCNEPTVQEFVSAGVDVITFSGDKLLGGPQAGIIVGRRELLATMKKHPLLRAVRIDKLTLAALEGTLQLYRDERRALQEIPTLRMLALSKEELAETAKRLAARLQKVVPPVVTLALVEGFSQVGGGALPLLQLPTTLISVSVGDKSAQEIEKVMRLSPVPVIGRIFKGAFLLDPRTINEEDISALTAALQGIVP.

Lysine 292 is subject to N6-(pyridoxal phosphate)lysine.

The protein belongs to the SelA family. Pyridoxal 5'-phosphate serves as cofactor.

Its subcellular location is the cytoplasm. The catalysed reaction is L-seryl-tRNA(Sec) + selenophosphate + H(+) = L-selenocysteinyl-tRNA(Sec) + phosphate. It functions in the pathway aminoacyl-tRNA biosynthesis; selenocysteinyl-tRNA(Sec) biosynthesis; selenocysteinyl-tRNA(Sec) from L-seryl-tRNA(Sec) (bacterial route): step 1/1. Converts seryl-tRNA(Sec) to selenocysteinyl-tRNA(Sec) required for selenoprotein biosynthesis. This is L-seryl-tRNA(Sec) selenium transferase from Geotalea daltonii (strain DSM 22248 / JCM 15807 / FRC-32) (Geobacter daltonii).